We begin with the raw amino-acid sequence, 311 residues long: tRNA dimethylallyltransferase (311 aa).

An ATP-binding site is contributed by 11-18 (GPTAVGKT). 13-18 (TAVGKT) contacts substrate. The tract at residues 36–39 (DSVQ) is interaction with substrate tRNA.

The protein belongs to the IPP transferase family. As to quaternary structure, monomer. Mg(2+) serves as cofactor.

The catalysed reaction is adenosine(37) in tRNA + dimethylallyl diphosphate = N(6)-dimethylallyladenosine(37) in tRNA + diphosphate. In terms of biological role, catalyzes the transfer of a dimethylallyl group onto the adenine at position 37 in tRNAs that read codons beginning with uridine, leading to the formation of N6-(dimethylallyl)adenosine (i(6)A). This is tRNA dimethylallyltransferase from Exiguobacterium sp. (strain ATCC BAA-1283 / AT1b).